We begin with the raw amino-acid sequence, 1813 residues long: U3 small nucleolar RNA-associated protein 10 (1813 aa).

HEAT repeat units follow at residues 245 to 283 (DVLI…KASL), 389 to 427 (SETI…LQFN), 428 to 464 (ESDT…DIMP), 584 to 621 (ADMQ…LASK), and 659 to 695 (IIHH…QDDS). Disordered regions lie at residues 686-705 (IRGP…STGV) and 887-912 (DLGS…SSMD). Residues 690-705 (RSQDDSDRTRSESTGV) show a composition bias toward basic and acidic residues. HEAT repeat units lie at residues 1058–1095 (QTID…AFEH), 1189–1228 (KIAV…KAHG), 1265–1302 (LSLV…SSND), 1309–1347 (ARVL…KYGK), 1398–1437 (EALP…HVPW), 1678–1715 (LASI…LAVA), and 1769–1806 (ALLP…ILGE).

Belongs to the HEATR1/UTP10 family. In terms of assembly, component of the ribosomal small subunit (SSU) processome.

It localises to the nucleus. The protein localises to the nucleolus. In terms of biological role, involved in nucleolar processing of pre-18S ribosomal RNA. Involved in ribosome biosynthesis. The sequence is that of U3 small nucleolar RNA-associated protein 10 from Coccidioides immitis (strain RS) (Valley fever fungus).